The chain runs to 413 residues: Aminopeptidase PepS (413 aa).

Residues Glu253, Glu319, Glu343, His348, His381, and Asp383 each coordinate a divalent metal cation.

This sequence belongs to the peptidase M29 family. Monomer. It depends on Co(2+) as a cofactor. Zn(2+) is required as a cofactor. Mg(2+) serves as cofactor.

Its function is as follows. Exhibits a high specificity towards peptides possessing arginine or aromatic amino acids at the N-terminus. Could be involved both in bacterial growth by supplying amino acids. This is Aminopeptidase PepS (pepS) from Streptococcus thermophilus.